We begin with the raw amino-acid sequence, 546 residues long: 5'-nucleotidase domain-containing protein 3 (546 aa).

The active-site Nucleophile is the Asp100. The Mg(2+) site is built by Asp100 and Asp102. Asp102 functions as the Proton donor in the catalytic mechanism. Position 249 to 257 (249 to 257) interacts with substrate; it reads KDSIRDVHI. Residue Asp387 coordinates Mg(2+).

The protein belongs to the 5'(3')-deoxyribonucleotidase family. It depends on Mg(2+) as a cofactor.

This chain is 5'-nucleotidase domain-containing protein 3 (Nt5dc3), found in Mus musculus (Mouse).